Consider the following 169-residue polypeptide: Methane monooxygenase component A gamma chain (169 aa).

As to quaternary structure, m.trichosporium has two forms of methane monooxygenase, a soluble and a membrane-bound type. The soluble type consists of four components (A to D): protein A, comprising three chains, in an alpha-2, beta-2, gamma-2 configuration, is a nonheme iron protein containing an unusual mu-hydroxo bridge structure at its active site and interacts with both oxygen and methane.

The catalysed reaction is methane + NADH + O2 + H(+) = methanol + NAD(+) + H2O. It carries out the reaction methane + NADPH + O2 + H(+) = methanol + NADP(+) + H2O. Functionally, responsible for the initial oxygenation of methane to methanol in methanotrophs. It also catalyzes the monohydroxylation of a variety of unactivated alkenes, alicyclic, aromatic and heterocyclic compounds. This is Methane monooxygenase component A gamma chain (mmoZ) from Methylosinus trichosporium.